Consider the following 803-residue polypeptide: Isoamylase 1, chloroplastic (803 aa).

The N-terminal 54 residues, 1–54 (MASLPHCLSARPLVVAAAPGRPGPGPGPWLRGGARRRNAAFSAGNAGRRVGLRR), are a transit peptide targeting the chloroplast. Catalysis depends on Asp432, which acts as the Nucleophile. Glu488 functions as the Proton donor in the catalytic mechanism.

Belongs to the glycosyl hydrolase 13 family. Forms a homo-pentamer and a hetero-hexamer composed of five ISA1 and one ISA2. Interacts with FLO6/SIP4. As to expression, highly expressed in developing endosperm. Expressed at low levels in leaves.

It is found in the plastid. The protein resides in the chloroplast. The catalysed reaction is Hydrolysis of (1-&gt;6)-alpha-D-glucosidic branch linkages in glycogen, amylopectin and their beta-limit dextrins.. Its pathway is glycan biosynthesis; starch biosynthesis. Inhibited by copper chloride, mercury chloride, ammonium molybdate and para-chloromercuribenzoate. Starch-debranching enzyme involved in amylopectin biosynthesis in endosperm. Functions by removing excess branches or improper branches that interfere with the formation of double helices of the cluster chains of amylopectin and crystallization of starch. Works as ISA1 homooligomer or together with ISA2 as heterooligomer. The heterooligomer ISA1 and ISA2 possesses higher affinity than the ISA1 homooligomer for various branched polyglucans in vitro, but no marked differences exist in chain preferences for debranching of amylopectin and phytoglycogen between these forms. The chain is Isoamylase 1, chloroplastic from Oryza sativa subsp. japonica (Rice).